Reading from the N-terminus, the 445-residue chain is ATPase PAAT (445 aa).

A phosphoserine mark is found at Ser177, Ser182, Ser254, and Ser302. A disordered region spans residues 426–445 (PTGIPLRHYDSGERLSNGER). Over residues 432–445 (RHYDSGERLSNGER) the composition is skewed to basic and acidic residues.

As to quaternary structure, homodimer. Interacts with ABCB7, ABCB8/MITOSUR and ABCB10.

It localises to the cytoplasm. Its subcellular location is the mitochondrion. The enzyme catalyses ATP + H2O = ADP + phosphate + H(+). In terms of biological role, ATPase that regulates mitochondrial ABC transporters ABCB7, ABCB8/MITOSUR and ABCB10. Regulates mitochondrial ferric concentration and heme biosynthesis and plays a role in the maintenance of mitochondrial homeostasis and cell survival. This Homo sapiens (Human) protein is ATPase PAAT.